Here is a 523-residue protein sequence, read N- to C-terminus: Probable aminopeptidase NPEPL1 (523 aa).

Residues lysine 260 and aspartate 265 each coordinate Zn(2+). Residue lysine 272 is part of the active site. Zn(2+) contacts are provided by aspartate 283, aspartate 342, and glutamate 344. Residue arginine 346 is part of the active site.

It belongs to the peptidase M17 family. Zn(2+) is required as a cofactor. It depends on Mn(2+) as a cofactor. In terms of tissue distribution, ubiquitously expressed.

Functionally, probably catalyzes the removal of unsubstituted N-terminal amino acids from various peptides. This Homo sapiens (Human) protein is Probable aminopeptidase NPEPL1 (NPEPL1).